The sequence spans 162 residues: Large ribosomal subunit protein bL17 (162 aa).

Residues 118–162 form a disordered region; that stretch reads RAPAAAPEAEEKGEKKAAGKAEKAPKAAKAPKAEKKPAKKAAKAE. Over residues 126–162 the composition is skewed to basic and acidic residues; the sequence is AEEKGEKKAAGKAEKAPKAAKAPKAEKKPAKKAAKAE.

Belongs to the bacterial ribosomal protein bL17 family. Part of the 50S ribosomal subunit. Contacts protein L32.

The polypeptide is Large ribosomal subunit protein bL17 (Anaeromyxobacter dehalogenans (strain 2CP-C)).